We begin with the raw amino-acid sequence, 147 residues long: Peptide methionine sulfoxide reductase MsrB (147 aa).

One can recognise a MsrB domain in the interval 8 to 131; it reads KEELKKVLTE…NSASLKFIPK (124 aa). The Nucleophile role is filled by C120.

This sequence belongs to the MsrB Met sulfoxide reductase family.

The enzyme catalyses L-methionyl-[protein] + [thioredoxin]-disulfide + H2O = L-methionyl-(R)-S-oxide-[protein] + [thioredoxin]-dithiol. This Clostridium perfringens (strain ATCC 13124 / DSM 756 / JCM 1290 / NCIMB 6125 / NCTC 8237 / Type A) protein is Peptide methionine sulfoxide reductase MsrB.